A 431-amino-acid chain; its full sequence is Adenylosuccinate synthetase (431 aa).

GTP-binding positions include 13-19 (GDEGKGK) and 41-43 (GHT). Asp-14 acts as the Proton acceptor in catalysis. Residues Asp-14 and Gly-41 each coordinate Mg(2+). Residues 14–17 (DEGK), 39–42 (NAGH), Thr-130, Arg-144, Gln-225, Thr-240, and Arg-304 each bind IMP. His-42 (proton donor) is an active-site residue. 300–306 (AVTGRPR) provides a ligand contact to substrate. Residues Arg-306, 332-334 (KLD), and 415-417 (STG) contribute to the GTP site.

The protein belongs to the adenylosuccinate synthetase family. Homodimer. Mg(2+) serves as cofactor.

Its subcellular location is the cytoplasm. It carries out the reaction IMP + L-aspartate + GTP = N(6)-(1,2-dicarboxyethyl)-AMP + GDP + phosphate + 2 H(+). It functions in the pathway purine metabolism; AMP biosynthesis via de novo pathway; AMP from IMP: step 1/2. Its function is as follows. Plays an important role in the de novo pathway of purine nucleotide biosynthesis. Catalyzes the first committed step in the biosynthesis of AMP from IMP. The sequence is that of Adenylosuccinate synthetase from Legionella pneumophila subsp. pneumophila (strain Philadelphia 1 / ATCC 33152 / DSM 7513).